Here is a 287-residue protein sequence, read N- to C-terminus: Homoserine kinase (287 aa).

78-88 (PLAHGLGSSSS) is an ATP binding site.

This sequence belongs to the GHMP kinase family. Homoserine kinase subfamily.

The protein localises to the cytoplasm. It catalyses the reaction L-homoserine + ATP = O-phospho-L-homoserine + ADP + H(+). The protein operates within amino-acid biosynthesis; L-threonine biosynthesis; L-threonine from L-aspartate: step 4/5. Its function is as follows. Catalyzes the ATP-dependent phosphorylation of L-homoserine to L-homoserine phosphate. In Lactobacillus acidophilus (strain ATCC 700396 / NCK56 / N2 / NCFM), this protein is Homoserine kinase.